The chain runs to 456 residues: Taurine--pyruvate aminotransferase (456 aa).

N6-(pyridoxal phosphate)lysine is present on Lys-280.

The protein belongs to the class-III pyridoxal-phosphate-dependent aminotransferase family. As to quaternary structure, homotetramer. Pyridoxal 5'-phosphate is required as a cofactor.

The catalysed reaction is taurine + pyruvate = sulfoacetaldehyde + L-alanine. It participates in organosulfur degradation; alkanesulfonate degradation. In terms of biological role, involved in an anaerobic respiration pathway that converts the sulfonate taurine (2-aminoethanesulfonate) to ammonia, acetate and sulfide. Catalyzes the initial metabolic reaction of anaerobic taurine degradation, i.e. the transamination reaction between taurine and pyruvate leading to sulfoacetaldehyde and alanine. The protein is Taurine--pyruvate aminotransferase of Bilophila wadsworthia (strain 3_1_6).